The sequence spans 233 residues: Histone H1-I (233 aa).

Disordered regions lie at residues 1–55 and 115–233; these read MSDS…HPPV and TGAS…KKSK. Low complexity predominate over residues 17 to 29; it reads KAASPAKSPAKSP. Residues 51–125 form the H15 domain; it reads THPPVSEMVV…GASGSFKMPP (75 aa). Basic and acidic residues-rich tracts occupy residues 128–137 and 146–155; these read KKVDRPESAP and TRVERKEKKV. Basic residues-rich tracts occupy residues 172 to 213 and 223 to 233; these read AAKK…KPTP and AAARKPAKKSK.

This sequence belongs to the histone H1/H5 family.

The protein localises to the nucleus. It is found in the chromosome. Histones H1 are necessary for the condensation of nucleosome chains into higher-order structures. In Glyptotendipes barbipes (Midge), this protein is Histone H1-I.